An 817-amino-acid polypeptide reads, in one-letter code: Dynamin-related protein 5A (817 aa).

Residues 1–20 are compositionally biased toward polar residues; it reads MANSNTYLTTPTKTPSSRRN. The segment at 1–37 is disordered; that stretch reads MANSNTYLTTPTKTPSSRRNQQSQSKMQSHSKDPINA. Residues 59-346 form the Dynamin-type G domain; that stretch reads KLPIPEIVAI…LQKRYKEAAP (288 aa). The G1 motif stretch occupies residues 69-76; it reads GGQSDGKS. GTP is bound at residue 69–76; sequence GGQSDGKS. A G2 motif region spans residues 95–97; it reads GTR. Positions 175-178 are G3 motif; that stretch reads DTPG. GTP contacts are provided by residues 175-179 and 244-247; these read DTPGF and SKFD. The G4 motif stretch occupies residues 244-247; the sequence is SKFD. Residues 280–283 form a G5 motif region; it reads LPKD. Disordered stretches follow at residues 405 to 425 and 616 to 658; these read APEQ…IGSW and LSDT…ETPS. Basic and acidic residues predominate over residues 618 to 629; it reads DTSRDEPMKDQE.

The protein belongs to the TRAFAC class dynamin-like GTPase superfamily. Dynamin/Fzo/YdjA family. In terms of tissue distribution, expressed in root and leaf meristems.

It localises to the cytoplasm. The protein localises to the cytoskeleton. Its subcellular location is the phragmoplast. In terms of biological role, probable microtubule-associated force-producing protein that is targeted to the forming cell plate during cytokinesis. May play a role in cell division. The protein is Dynamin-related protein 5A (DRP5A) of Arabidopsis thaliana (Mouse-ear cress).